Here is a 123-residue protein sequence, read N- to C-terminus: D-ribose pyranase (123 aa).

The active-site Proton donor is H20. Substrate contacts are provided by residues D28, H90, and 112 to 114 (YAN).

It belongs to the RbsD / FucU family. RbsD subfamily. Homodecamer.

It localises to the cytoplasm. The enzyme catalyses beta-D-ribopyranose = beta-D-ribofuranose. Its pathway is carbohydrate metabolism; D-ribose degradation; D-ribose 5-phosphate from beta-D-ribopyranose: step 1/2. Its function is as follows. Catalyzes the interconversion of beta-pyran and beta-furan forms of D-ribose. This chain is D-ribose pyranase, found in Corynebacterium glutamicum (strain ATCC 13032 / DSM 20300 / JCM 1318 / BCRC 11384 / CCUG 27702 / LMG 3730 / NBRC 12168 / NCIMB 10025 / NRRL B-2784 / 534).